A 76-amino-acid polypeptide reads, in one-letter code: MRRHDIIIKLLLLMCLLLSRFVTRECQEVHFKIGPAKIIAKPNNARVMPTWGEEKKWHKHPSGPNPTGNRHPPVKH.

A signal peptide spans 1 to 26 (MRRHDIIIKLLLLMCLLLSRFVTREC). A disordered region spans residues 53 to 76 (EEKKWHKHPSGPNPTGNRHPPVKH). Residues Pro-61 and Pro-64 each carry the hydroxyproline modification. An O-linked (Ara...) hydroxyproline glycan is attached at Pro-64.

Belongs to the CLV3/ESR signal peptide family. The O-glycosylation (arabinosylation) of the hydroxyproline Pro-64 enhances binding affinity of the CLE46p peptide for its receptor.

Its subcellular location is the secreted. It is found in the extracellular space. Functionally, extracellular signal peptide that regulates cell fate. The protein is CLAVATA3/ESR (CLE)-related protein 46 of Arabidopsis thaliana (Mouse-ear cress).